Here is a 187-residue protein sequence, read N- to C-terminus: Transmembrane protein 272 (187 aa).

4 consecutive transmembrane segments (helical) span residues 21–41 (CFVV…FIGM), 52–72 (LIPL…SLLL), 107–127 (IHLL…YWVF), and 149–169 (LYLF…LLLL).

It is found in the membrane. In Homo sapiens (Human), this protein is Transmembrane protein 272.